Consider the following 74-residue polypeptide: MATWIWILIVIVVGLACAAGGFYGARKYMENYLKDNPPINEDQLRAMMLQMGQKPSQRKLHQMMAAMQQNARKK.

The chain crosses the membrane as a helical span at residues 4–24; that stretch reads WIWILIVIVVGLACAAGGFYG.

Belongs to the UPF0154 family.

It is found in the cell membrane. This chain is UPF0154 protein LVIS_1358, found in Levilactobacillus brevis (strain ATCC 367 / BCRC 12310 / CIP 105137 / JCM 1170 / LMG 11437 / NCIMB 947 / NCTC 947) (Lactobacillus brevis).